The primary structure comprises 476 residues: Angiotensinogen (476 aa).

A signal peptide spans 1–24 (MAPAGVSLRATILCLLAWAGLAAG). Position 25 is a beta-decarboxylated aspartate; in form angiotensin-A (aspartate 25). 4 N-linked (GlcNAc...) asparagine glycosylation sites follow: asparagine 38, asparagine 161, asparagine 295, and asparagine 319. Cysteine 42 and cysteine 162 are oxidised to a cystine.

It belongs to the serpin family. During pregnancy, exists as a disulfide-linked 2:2 heterotetramer with the proform of PRG2 and as a complex (probably a 2:2:2 heterohexamer) with pro-PRG2 and C3dg. In terms of processing, beta-decarboxylation of Asp-25 in angiotensin-2, by mononuclear leukocytes produces alanine. The resulting peptide form, angiotensin-A, has the same affinity for the AT1 receptor as angiotensin-2, but a higher affinity for the AT2 receptor. Post-translationally, in response to low blood pressure, the enzyme renin/REN cleaves angiotensinogen to produce angiotensin-1. Angiotensin-1 is a substrate of ACE (angiotensin converting enzyme) that removes a dipeptide to yield the physiologically active peptide angiotensin-2. Angiotensin-1 and angiotensin-2 can be further processed to generate angiotensin-3, angiotensin-4. Angiotensin 1-9 is cleaved from angiotensin-1 by ACE2 and can be further processed by ACE to produce angiotensin 1-7, angiotensin 1-5 and angiotensin 1-4. Angiotensin 1-7 has also been proposed to be cleaved from angiotensin-2 by ACE2 or from angiotensin-1 by MME (neprilysin). The disulfide bond is labile. Angiotensinogen is present in the circulation in a near 40:60 ratio with the oxidized disulfide-bonded form, which preferentially interacts with receptor-bound renin. As to expression, expressed by the liver and secreted in plasma.

The protein localises to the secreted. Its function is as follows. Essential component of the renin-angiotensin system (RAS), a potent regulator of blood pressure, body fluid and electrolyte homeostasis. In terms of biological role, acts directly on vascular smooth muscle as a potent vasoconstrictor, affects cardiac contractility and heart rate through its action on the sympathetic nervous system, and alters renal sodium and water absorption through its ability to stimulate the zona glomerulosa cells of the adrenal cortex to synthesize and secrete aldosterone. Acts by binding to angiotensin receptors AGTR1 and AGTR2. Also binds the DEAR/FBXW7-AS1 receptor. Functionally, stimulates aldosterone release. Is a ligand for the G-protein coupled receptor MAS1. Has vasodilator and antidiuretic effects. Has an antithrombotic effect that involves MAS1-mediated release of nitric oxide from platelets. This chain is Angiotensinogen, found in Homo sapiens (Human).